The following is a 311-amino-acid chain: Probable manganese-dependent inorganic pyrophosphatase (311 aa).

6 residues coordinate Mn(2+): His9, Asp13, Asp15, Asp77, His99, and Asp151.

Belongs to the PPase class C family. Mn(2+) serves as cofactor.

The protein resides in the cytoplasm. The enzyme catalyses diphosphate + H2O = 2 phosphate + H(+). This is Probable manganese-dependent inorganic pyrophosphatase from Streptococcus agalactiae serotype III (strain NEM316).